Reading from the N-terminus, the 361-residue chain is MDGREAMAFPGSHSQYYLQRGAFTNLAPSQVASGLHAPPPHTGLRPMSNPNIHHPQANNPGPPFSDFGHTIHMGVVSSASDADVQPPPPPPPPEEPMVKRKRGRPRKYGEPMVSNKSRDSSPMSDPNEPKRARGRPPGTGRKQRLANLGEWMNTSAGLAFAPHVISIGAGEDIAAKVLSFSQQRPRALCIMSGTGTISSVTLCKPGSTDRHLTYEGPFEIISFGGSYLVNEEGGSRSRTGGLSVSLSRPDGSIIAGGVDMLIAANLVQVVACSFVYGARAKTHNNNNKTIRQEKEPNEEDNNSEMETTPGSAAEPAASAGQQTPQNFSSQGIRGWPGSGSGSGRSLDICRNPLTDFDLTRG.

2 disordered regions span residues 29 to 143 (SQVA…GRKQ) and 286 to 361 (NNKT…LTRG). Residues 48–59 (SNPNIHHPQANN) show a composition bias toward polar residues. The segment covering 85 to 95 (QPPPPPPPPEE) has biased composition (pro residues). Positions 99-107 (KRKRGRPRK) match the Bipartite nuclear localization signal motif. 2 DNA-binding regions (a.T hook) span residues 99–111 (KRKRGRPRKYGEP) and 130–142 (KRARGRPPGTGRK). Positions 154–297 (TSAGLAFAPH…KTIRQEKEPN (144 aa)) constitute a PPC domain. Over residues 306–322 (ETTPGSAAEPAASAGQQ) the composition is skewed to low complexity.

Homodimer. Interacts with AHL27, AHL29 and ATAF2/NAC081.

Its subcellular location is the nucleus. Transcription factor that specifically binds AT-rich DNA sequences related to the nuclear matrix attachment regions (MARs). This Arabidopsis thaliana (Mouse-ear cress) protein is AT-hook motif nuclear-localized protein 12.